The primary structure comprises 485 residues: Peroxisomal catalase (485 aa).

Catalysis depends on residues His53 and Asn126. Tyr336 serves as a coordination point for heme.

It belongs to the catalase family. In terms of assembly, homotetramer. Requires heme as cofactor.

The protein localises to the peroxisome matrix. It catalyses the reaction 2 H2O2 = O2 + 2 H2O. Its function is as follows. Catalyzes the degradation of hydrogen peroxide (H(2)O(2)) generated by peroxisomal oxidases to water and oxygen, thereby protecting cells from the toxic effects of hydrogen peroxide. This chain is Peroxisomal catalase (CAT1), found in Candida albicans (strain SC5314 / ATCC MYA-2876) (Yeast).